Consider the following 482-residue polypeptide: Carbamoyl phosphate synthase large chain, N-terminal section (482 aa).

The tract at residues 1-398 (MESIKKVMVF…ALQKAIRSLD (398 aa)) is carboxyphosphate synthetic domain. Residues Arg-126, Arg-166, Gly-172, Gly-173, Glu-205, Val-207, Glu-212, Gly-238, Ile-239, His-240, Gln-281, and Glu-295 each coordinate ATP. The ATP-grasp domain maps to 130–324 (AEAMAEINEP…IARIAAKIAI (195 aa)). 3 residues coordinate Mg(2+): Gln-281, Glu-295, and Asn-297. Residues Gln-281, Glu-295, and Asn-297 each contribute to the Mn(2+) site.

It belongs to the CarB family. In terms of assembly, composed of two chains; the small (or glutamine) chain promotes the hydrolysis of glutamine to ammonia, which is used by the large (or ammonia) chain to synthesize carbamoyl phosphate. Tetramer of heterodimers (alpha,beta)4. Mg(2+) serves as cofactor. The cofactor is Mn(2+).

The enzyme catalyses hydrogencarbonate + L-glutamine + 2 ATP + H2O = carbamoyl phosphate + L-glutamate + 2 ADP + phosphate + 2 H(+). It carries out the reaction hydrogencarbonate + NH4(+) + 2 ATP = carbamoyl phosphate + 2 ADP + phosphate + 2 H(+). Its pathway is amino-acid biosynthesis; L-arginine biosynthesis; carbamoyl phosphate from bicarbonate: step 1/1. It functions in the pathway pyrimidine metabolism; UMP biosynthesis via de novo pathway; (S)-dihydroorotate from bicarbonate: step 1/3. Large subunit of the glutamine-dependent carbamoyl phosphate synthetase (CPSase). CPSase catalyzes the formation of carbamoyl phosphate from the ammonia moiety of glutamine, carbonate, and phosphate donated by ATP, constituting the first step of 2 biosynthetic pathways, one leading to arginine and/or urea and the other to pyrimidine nucleotides. The large subunit (synthetase) binds the substrates ammonia (free or transferred from glutamine from the small subunit), hydrogencarbonate and ATP and carries out an ATP-coupled ligase reaction, activating hydrogencarbonate by forming carboxy phosphate which reacts with ammonia to form carbamoyl phosphate. In Methanocaldococcus jannaschii (strain ATCC 43067 / DSM 2661 / JAL-1 / JCM 10045 / NBRC 100440) (Methanococcus jannaschii), this protein is Carbamoyl phosphate synthase large chain, N-terminal section (carB1).